The primary structure comprises 108 residues: uncharacterized protein (108 aa).

3 helical membrane passes run 4–24 (IIFLFRAIWLALSLLILFFSM), 46–66 (GMMVICFPTGIVFFIALIFIG), and 81–101 (IMAIIIWLYFLSGGYIQWFVL).

It localises to the cell membrane. This is an uncharacterized protein from Escherichia coli O157:H7.